Here is a 121-residue protein sequence, read N- to C-terminus: DNA-directed RNA polymerase subunit Rpo8 (121 aa).

This sequence belongs to the archaeal Rpo8 RNA polymerase subunit family. As to quaternary structure, part of the 13-subunit RNA polymerase complex. Post-translationally, this subunit is phosphorylated.

It is found in the cytoplasm. The catalysed reaction is RNA(n) + a ribonucleoside 5'-triphosphate = RNA(n+1) + diphosphate. In terms of biological role, DNA-dependent RNA polymerase (RNAP) catalyzes the transcription of DNA into RNA using the four ribonucleoside triphosphates as substrates. In Sulfolobus acidocaldarius (strain ATCC 33909 / DSM 639 / JCM 8929 / NBRC 15157 / NCIMB 11770), this protein is DNA-directed RNA polymerase subunit Rpo8.